A 363-amino-acid chain; its full sequence is Ribonuclease P protein subunit p40 (363 aa).

In terms of assembly, component of nuclear RNase P and RNase MRP ribonucleoproteins. RNase P consists of a catalytic RNA moiety and about 10 protein subunits; POP1, POP4, POP5, POP7, RPP14, RPP21, RPP25, RPP30, RPP38 and RPP40. Within the RNase P complex, POP1, POP7 and RPP25 form the 'finger' subcomplex, POP5, RPP14, RPP40 and homodimeric RPP30 form the 'palm' subcomplex, and RPP21, POP4 and RPP38 form the 'wrist' subcomplex. All subunits of the RNase P complex interact with the catalytic RNA. Several subunits of RNase P are also part of the RNase MRP complex. RNase MRP consists of a catalytic RNA moiety and about 8 protein subunits; POP1, POP7, RPP25, RPP30, RPP38, RPP40 and possibly also POP4 and POP5.

The protein resides in the nucleus. It is found in the nucleolus. Functionally, component of ribonuclease P, a ribonucleoprotein complex that generates mature tRNA molecules by cleaving their 5'-ends. Also a component of the MRP ribonuclease complex, which cleaves pre-rRNA sequences. This Homo sapiens (Human) protein is Ribonuclease P protein subunit p40 (RPP40).